We begin with the raw amino-acid sequence, 180 residues long: MASMSNITPDIIVNAQINSEDENVLDFIIEDEYYLKKRGVGAHIIKVASSPQLRLLYKNAYSTVSCGNYGVLCNLVQNGEYDLNAIMFNCAEIKLNKGQMLFQTKIWRSDNSKTDAAVHTSSPKRTVETENDDDGEAASAAAIDEQEGNADVVGLDFEENIDDGDAPTPKKQKLDNAKQD.

Residues 112 to 180 (SKTDAAVHTS…KQKLDNAKQD (69 aa)) are disordered. The span at 156–165 (DFEENIDDGD) shows a compositional bias: acidic residues.

This is Telokin-like protein 20 (TLP20) from Lepidoptera (butterflies and moths).